We begin with the raw amino-acid sequence, 326 residues long: Immune-associated nucleotide-binding protein 4 (326 aa).

One can recognise an AIG1-type G domain in the interval E17–Q225. Residues G26–S33 are G1. Residues G26–A34 and S47 contribute to the GTP site. The G2 stretch occupies residues G53–K57. Residues D75–G78 are G3. Residues T145–D148 are G4. The interval D184–R186 is G5. N185 is a GTP binding site. The stretch at T217 to K241 forms a coiled coil.

This sequence belongs to the TRAFAC class TrmE-Era-EngA-EngB-Septin-like GTPase superfamily. AIG1/Toc34/Toc159-like paraseptin GTPase family. IAN subfamily. In terms of tissue distribution, expressed in radicles of the germinating seeds.

In Arabidopsis thaliana (Mouse-ear cress), this protein is Immune-associated nucleotide-binding protein 4.